The following is a 546-amino-acid chain: Probable protein kinase UbiB (546 aa).

The Protein kinase domain occupies aspartate 124–leucine 502. Residues leucine 130–valine 138 and lysine 153 each bind ATP. Residue aspartate 288 is the Proton acceptor of the active site. The next 2 helical transmembrane spans lie at tyrosine 501–proline 521 and glutamate 522–tryptophan 542.

It belongs to the ABC1 family. UbiB subfamily.

It localises to the cell inner membrane. Its pathway is cofactor biosynthesis; ubiquinone biosynthesis [regulation]. Functionally, is probably a protein kinase regulator of UbiI activity which is involved in aerobic coenzyme Q (ubiquinone) biosynthesis. The chain is Probable protein kinase UbiB from Salmonella enteritidis PT4 (strain P125109).